Here is a 407-residue protein sequence, read N- to C-terminus: MDLLNTLVDKGLRRETPTREEALAVLVTSDDDLLDVVAAAGKVRRHWFGRRVKLNYLVNLKSGLCPEDCSYCSQRLGSKAEILKYTWLKPDQASAAAAAGVSGGAKRVCLVASGRGPTDRDVDRVSDTIKAIKEQNESVEVCACLGLLSDGQAERLREAGADAYNHNLNTSESTYGDITTTHTYADRVDTVNKAHAAGLSACSGLIAGMGESDEDLVDVVFSLRELDPDSVPVNFLIPMEGTPLAKEWHLTPQRCLRILAMTRFVCPDVEVRIAGGREVHLRTMQPLALHLANSIFLGDYLTSEGQAGHADLELIADAGFEVEGAGEVTLPEHRASVRGGGCGSHEGGGACGSHDGADGDAGCGSHAGGGVCAPAPAATTPRPAEEPRTDLVAVRRRGAGTDLAPNA.

The 231-residue stretch at 47–277 (WFGRRVKLNY…DVEVRIAGGR (231 aa)) folds into the Radical SAM core domain. The [4Fe-4S] cluster site is built by Cys65, Cys69, and Cys72. Positions 109, 142, 202, and 272 each coordinate [2Fe-2S] cluster. Residues 368–407 (GGGVCAPAPAATTPRPAEEPRTDLVAVRRRGAGTDLAPNA) are disordered. The segment covering 373–382 (APAPAATTPR) has biased composition (low complexity).

The protein belongs to the radical SAM superfamily. Biotin synthase family. Homodimer. Requires [4Fe-4S] cluster as cofactor. [2Fe-2S] cluster serves as cofactor.

It catalyses the reaction (4R,5S)-dethiobiotin + (sulfur carrier)-SH + 2 reduced [2Fe-2S]-[ferredoxin] + 2 S-adenosyl-L-methionine = (sulfur carrier)-H + biotin + 2 5'-deoxyadenosine + 2 L-methionine + 2 oxidized [2Fe-2S]-[ferredoxin]. It participates in cofactor biosynthesis; biotin biosynthesis; biotin from 7,8-diaminononanoate: step 2/2. In terms of biological role, catalyzes the conversion of dethiobiotin (DTB) to biotin by the insertion of a sulfur atom into dethiobiotin via a radical-based mechanism. This Streptomyces coelicolor (strain ATCC BAA-471 / A3(2) / M145) protein is Biotin synthase.